Consider the following 557-residue polypeptide: Arginine--tRNA ligase (557 aa).

The 'HIGH' region signature appears at Ala-132–Asn-142.

It belongs to the class-I aminoacyl-tRNA synthetase family. In terms of assembly, monomer.

It is found in the cytoplasm. The catalysed reaction is tRNA(Arg) + L-arginine + ATP = L-arginyl-tRNA(Arg) + AMP + diphosphate. In Carboxydothermus hydrogenoformans (strain ATCC BAA-161 / DSM 6008 / Z-2901), this protein is Arginine--tRNA ligase.